Here is a 344-residue protein sequence, read N- to C-terminus: RNA 3'-terminal phosphate cyclase (344 aa).

Residues glutamine 103 and histidine 283–glutamine 287 contribute to the ATP site. Histidine 308 (tele-AMP-histidine intermediate) is an active-site residue.

It belongs to the RNA 3'-terminal cyclase family. Type 1 subfamily.

It localises to the cytoplasm. It carries out the reaction a 3'-end 3'-phospho-ribonucleotide-RNA + ATP = a 3'-end 2',3'-cyclophospho-ribonucleotide-RNA + AMP + diphosphate. In terms of biological role, catalyzes the conversion of 3'-phosphate to a 2',3'-cyclic phosphodiester at the end of RNA. The mechanism of action of the enzyme occurs in 3 steps: (A) adenylation of the enzyme by ATP; (B) transfer of adenylate to an RNA-N3'P to produce RNA-N3'PP5'A; (C) and attack of the adjacent 2'-hydroxyl on the 3'-phosphorus in the diester linkage to produce the cyclic end product. The biological role of this enzyme is unknown but it is likely to function in some aspects of cellular RNA processing. The polypeptide is RNA 3'-terminal phosphate cyclase (Salmonella paratyphi C (strain RKS4594)).